The sequence spans 622 residues: Probable ATP-dependent RNA helicase DDX41 (622 aa).

A compositionally biased stretch (basic and acidic residues) spans 1 to 15; the sequence is MEDSEPERKRARADE. Disordered stretches follow at residues 1 to 39 and 51 to 84; these read MEDSEPERKRARADEATAGGSRSEDEDEDDEDYVPYVPL and LQRRRKGATEEEQQDSGSEPRGDEDDIPLGPQSN. The residue at position 4 (Ser-4) is a Phosphoserine. Residue Lys-9 is modified to N6-acetyllysine. Lys-9 participates in a covalent cross-link: Glycyl lysine isopeptide (Lys-Gly) (interchain with G-Cter in ubiquitin). Residues Ser-21 and Ser-23 each carry the phosphoserine modification. Over residues 24 to 33 the composition is skewed to acidic residues; it reads EDEDEDDEDY. Tyr-33 is modified (phosphotyrosine). Lys-115 is covalently cross-linked (Glycyl lysine isopeptide (Lys-Gly) (interchain with G-Cter in ubiquitin)). The Q motif motif lies at 181-209; it reads KSFKEMKFPAAILRGLKKKGILHPTPIQI. Positions 212 to 396 constitute a Helicase ATP-binding domain; that stretch reads IPTILSGRDM…KSALVKPVTI (185 aa). 225–232 lines the ATP pocket; it reads AFTGSGKT. The DEAD box motif lies at 344-347; the sequence is DEAD. The 161-residue stretch at 407-567 folds into the Helicase C-terminal domain; the sequence is DVIQEVEYVK…KVPPVLQVLH (161 aa). Tyr-414 is subject to Phosphotyrosine. Glycyl lysine isopeptide (Lys-Gly) (interchain with G-Cter in SUMO2) cross-links involve residues Lys-416 and Lys-442. The CCHC-type zinc finger occupies 580-597; it reads RGCAFCGGLGHRITDCPK.

Belongs to the DEAD box helicase family. DDX41 subfamily. In terms of assembly, identified in the spliceosome C complex. Interacts with ERCC6. Interacts with FAM50A. Interacts with STING1. Interacts with CGAS. Interacts with several spliceosomes components such as PRP19 or CDC5L. In terms of processing, acetylation at Lys-9 regulates the nuclear/cytoplasmic localization. Phosphorylated by BTK; phosphorylation induces binding to dsDNA and STING1. Post-translationally, 'Lys-48'-linked ubiquitinated and degraded by TRIM21 leading to negative regulation of the innate immune response to intracellular dsDNA.

It is found in the nucleus. The protein localises to the cytoplasm. It carries out the reaction ATP + H2O = ADP + phosphate + H(+). Multifunctional protein that participates in many aspects of cellular RNA metabolism. Plays pivotal roles in innate immune sensing and hematopoietic homeostasis. Recognizes foreign or self-nucleic acids generated during microbial infection, thereby initiating anti-pathogen responses. Mechanistically, phosphorylation by BTK allows binding to dsDNA leading to interaction with STING1. Modulates the homeostasis of dsDNA through its ATP-dependent DNA-unwinding activity and ATP-independent strand-annealing activity. In turn, induces STING1-mediated type I interferon and cytokine responses to DNA and DNA viruses. During murine leukemia virus infection, primarily senses the DNA/RNA hybrid generated at the first step of reverse transcription, while cGAS recognizes dsDNA generated at the next step and both are needed for the antiretroviral innate immune response. Selectively modulates the transcription of certain immunity-associated genes by regulating their alternative splicing. Binds to RNA (R)-loops, structures consisting of DNA/RNA hybrids and a displaced strand of DNA that occur during transcription, and prevents their accumulation, thereby maintaining genome stability. Also participates in pre-mRNA splicing, translational regulation and snoRNA processing, which is essential for ribosome biogenesis. This is Probable ATP-dependent RNA helicase DDX41 (Ddx41) from Mus musculus (Mouse).